The chain runs to 359 residues: DNA ligase (359 aa).

ATP contacts are provided by residues E32–Y35, R39, R55–S57, and E93. The active-site N6-AMP-lysine intermediate is K34. Position 217 (E217) interacts with a divalent metal cation. ATP contacts are provided by K232 and K238.

It belongs to the ATP-dependent DNA ligase family. A divalent metal cation serves as cofactor.

The enzyme catalyses ATP + (deoxyribonucleotide)n-3'-hydroxyl + 5'-phospho-(deoxyribonucleotide)m = (deoxyribonucleotide)n+m + AMP + diphosphate.. DNA ligase that seals nicks in double-stranded DNA during DNA replication, DNA recombination and DNA repair in an ATP-dependent reaction. Binds specifically to DNA nicks containing a 3'-OH and a 5'-phosphate group. This is DNA ligase from Escherichia phage T7 (Bacteriophage T7).